The primary structure comprises 959 residues: Leucine--tRNA ligase (959 aa).

The 'HIGH' region motif lies at 39–49 (PYVNAYPHLGS). A 'KMSKS' region motif is present at residues 637-641 (KMSKS). K640 contacts ATP. The disordered stretch occupies residues 933 to 959 (TEEDGGSPRRANALPGRPALYAEKRGG).

This sequence belongs to the class-I aminoacyl-tRNA synthetase family.

It is found in the cytoplasm. It carries out the reaction tRNA(Leu) + L-leucine + ATP = L-leucyl-tRNA(Leu) + AMP + diphosphate. This is Leucine--tRNA ligase from Aeropyrum pernix (strain ATCC 700893 / DSM 11879 / JCM 9820 / NBRC 100138 / K1).